Reading from the N-terminus, the 874-residue chain is Probable RNA-directed RNA polymerase (874 aa).

The protein belongs to the totiviridae RNA-directed RNA polymerase family.

The catalysed reaction is RNA(n) + a ribonucleoside 5'-triphosphate = RNA(n+1) + diphosphate. Functionally, RNA-dependent RNA polymerase which replicates the viral genome. Catalyzes the transcription of fully conservative plus-strand genomic RNAs that are extruded from the virion into the cytoplasm where they function as mRNAs for translation of viral proteins and also as substrates for encapsidation to form new virions. Once encapsidated, the positive strand is converted to dsRNA by the RNA-directed RNA polymerase. Displays ssRNA-binding activity. This is Probable RNA-directed RNA polymerase (ORF3) from Leishmania major (LRV-1-1).